A 624-amino-acid chain; its full sequence is Chaperone protein HtpG (624 aa).

Residues 1–336 (MKGQETRGFQ…SSDLSLNVSR (336 aa)) form an a; substrate-binding region. The tract at residues 337 to 552 (EILQDSTVTR…ADEMSTQMAK (216 aa)) is b. Residues 553 to 624 (LFAAAGQKVP…IRRMNQLLVS (72 aa)) are c.

The protein belongs to the heat shock protein 90 family. In terms of assembly, homodimer.

The protein resides in the cytoplasm. Molecular chaperone. Has ATPase activity. The sequence is that of Chaperone protein HtpG from Shigella dysenteriae serotype 1 (strain Sd197).